The sequence spans 157 residues: Small ribosomal subunit protein bS16 (157 aa).

Residues 114–157 (NEGPTAEAITEKKKKAKEEAAAKAAAEAEAAAKAEEAPAEEAAE) are disordered.

This sequence belongs to the bacterial ribosomal protein bS16 family.

The chain is Small ribosomal subunit protein bS16 from Corynebacterium diphtheriae (strain ATCC 700971 / NCTC 13129 / Biotype gravis).